We begin with the raw amino-acid sequence, 1400 residues long: Clustered mitochondria protein homolog (1400 aa).

Disordered stretches follow at residues M1–S39, G56–D78, and G212–P243. Over residues G56–G69 the composition is skewed to basic and acidic residues. A Clu domain is found at R380–L622. The segment at A684 to A741 is disordered. Over residues D707–P722 the composition is skewed to low complexity. The span at A727 to A741 shows a compositional bias: polar residues. TPR repeat units lie at residues A1088–V1121, C1130–V1163, I1172–V1205, and A1214–Y1247. Polar residues predominate over residues Q1377–S1388. The disordered stretch occupies residues Q1377–D1400. The span at L1390–D1400 shows a compositional bias: basic and acidic residues.

It belongs to the CLU family.

The protein resides in the cytoplasm. Functionally, mRNA-binding protein involved in proper cytoplasmic distribution of mitochondria. The chain is Clustered mitochondria protein homolog from Danio rerio (Zebrafish).